Here is a 427-residue protein sequence, read N- to C-terminus: Tryptophan synthase beta chain (427 aa).

N6-(pyridoxal phosphate)lysine is present on Lys-100.

It belongs to the TrpB family. As to quaternary structure, tetramer of two alpha and two beta chains. Pyridoxal 5'-phosphate serves as cofactor.

It catalyses the reaction (1S,2R)-1-C-(indol-3-yl)glycerol 3-phosphate + L-serine = D-glyceraldehyde 3-phosphate + L-tryptophan + H2O. Its pathway is amino-acid biosynthesis; L-tryptophan biosynthesis; L-tryptophan from chorismate: step 5/5. The beta subunit is responsible for the synthesis of L-tryptophan from indole and L-serine. This chain is Tryptophan synthase beta chain (trpB), found in Streptomyces coelicolor (strain ATCC BAA-471 / A3(2) / M145).